Consider the following 890-residue polypeptide: Phosphatidate phosphatase LPIN1 (890 aa).

Residues 1–108 form an N-LIP region; that stretch reads MNYVGQLAGQ…IPMHLATSPI (108 aa). Residues Ser106 and Ser150 each carry the phosphoserine modification. 4 disordered regions span residues 125–183, 228–300, 365–392, and 421–456; these read VDRM…DMFP, SYPN…SSRK, KPPS…SRHL, and SGLA…STSD. The segment covering 152 to 161 has biased composition (basic residues); the sequence is VKKRRKRRRK. The Nuclear localization signal motif lies at 153 to 158; it reads KKRRKR. Composition is skewed to basic and acidic residues over residues 162–172 and 252–265; these read SQLDSLKRDDN and SDSE…ERTG. Phosphoserine is present on residues Ser252, Ser254, and Ser260. Thr264 carries the phosphothreonine modification. Ser294 is modified (phosphoserine). Position 425 is an N6-acetyllysine (Lys425). Polar residues predominate over residues 431–440; that stretch reads GARSANQSPQ. Phosphoserine is present on residues Ser434, Ser438, and Ser449. Residues 441-456 are compositionally biased toward low complexity; it reads SVGSSGVDSGVESTSD. Lys565 participates in a covalent cross-link: Glycyl lysine isopeptide (Lys-Gly) (interchain with G-Cter in SUMO). Positions 566–616 are disordered; it reads EESKPEQCLAGKAHSTGEQPPQLSLATRVKHESSSSDEERAAAKPSNAGHL. Polar residues predominate over residues 581–590; that stretch reads TGEQPPQLSL. Positions 594 to 607 are enriched in basic and acidic residues; sequence VKHESSSSDEERAA. Lys595 carries the post-translational modification N6-acetyllysine. Lys595 participates in a covalent cross-link: Glycyl lysine isopeptide (Lys-Gly) (interchain with G-Cter in SUMO). A phosphoserine mark is found at Ser600 and Ser601. Residues 624 to 830 form a C-LIP region; the sequence is YKKTLRLTSE…VNPKGELVQE (207 aa). The DXDXT motif motif lies at 678 to 682; sequence DIDGT. The short motif at 689–693 is the LXXIL motif element; the sequence is LGHIL. Phosphoserine is present on residues Ser887 and Ser889.

It belongs to the lipin family. Interacts (via LXXIL motif) with PPARA. Interacts with PPARGC1A. Interaction with PPARA and PPARGC1A leads to the formation of a complex that modulates gene transcription. Interacts with MEF2C. Requires Mg(2+) as cofactor. It depends on Mn(2+) as a cofactor. Phosphorylated at multiple sites by mTOR in response to insulin, leading to its inactivation. Phosphorylation does not affect the catalytic activity but regulates the localization. Phosphorylation is decreased by epinephrine. Dephosphorylated by the CTDNEP1-CNEP1R1 complex. Dephosphorylation following mTOR inhibition promotes its activity. Post-translationally, acetylation at Lys-425 and Lys-595 by KAT5 in response to fatty acids promotes translocation to the endoplasmic reticulum and synthesis of diacylglycerol. In terms of processing, sumoylated. Specifically expressed in skeletal muscle. Also abundant in adipose tissue. Lower levels in some portions of the digestive tract.

The protein resides in the cytoplasm. It is found in the cytosol. Its subcellular location is the endoplasmic reticulum membrane. It localises to the nucleus membrane. It carries out the reaction a 1,2-diacyl-sn-glycero-3-phosphate + H2O = a 1,2-diacyl-sn-glycerol + phosphate. The catalysed reaction is 1-octadecanoyl-2-(4Z,7Z,10Z,13Z,16Z,19Z-docosahexaenoyl)-sn-glycero-3-phosphate + H2O = 1-octadecanoyl-2-(4Z,7Z,10Z,13Z,16Z,19Z-docosahexaenoyl)-sn-glycerol + phosphate. It catalyses the reaction 1-octadecanoyl-2-(5Z,8Z,11Z,14Z-eicosatetraenoyl)-sn-glycero-3-phosphate + H2O = 1-octadecanoyl-2-(5Z,8Z,11Z,14Z-eicosatetraenoyl)-sn-glycerol + phosphate. The enzyme catalyses 1-octadecanoyl-2-(9Z,12Z-octadecadienoyl)-sn-glycero-3-phosphate + H2O = 1-octadecanoyl-2-(9Z,12Z)-octadecadienoyl-sn-glycerol + phosphate. It carries out the reaction 1-octadecanoyl-2-(9Z-octadecenoyl)-sn-glycero-3-phosphate + H2O = 1-octadecanoyl-2-(9Z-octadecenoyl)-sn-glycerol + phosphate. The catalysed reaction is 1-hexadecanoyl-2-(4Z,7Z,10Z,13Z,16Z,19Z-docosahexaenoyl)-sn-glycero-3-phosphate + H2O = 1-hexadecanoyl-2-(4Z,7Z,10Z,13Z,16Z,19Z-docosahexaenoyl)-sn-glycerol + phosphate. It catalyses the reaction 1,2-dioctadecanoyl-sn-glycero-3-phosphate + H2O = 1,2-dioctadecanoyl-sn-glycerol + phosphate. The enzyme catalyses 1-hexadecanoyl-2-(5Z,8Z,11Z,14Z-eicosatetraenoyl)-sn-glycero-3-phosphate + H2O = 1-hexadecanoyl-2-(5Z,8Z,11Z,14Z-eicosatetraenoyl)-sn-glycerol + phosphate. It carries out the reaction 1-hexadecanoyl-2-(9Z,12Z-octadecadienoyl)-sn-glycero-3-phosphate + H2O = 1-hexadecanoyl-2-(9Z,12Z-octadecadienoyl)-sn-glycerol + phosphate. The catalysed reaction is 1-hexadecanoyl-2-(9Z-octadecenoyl)-sn-glycero-3-phosphate + H2O = 1-hexadecanoyl-2-(9Z-octadecenoyl)-sn-glycerol + phosphate. It catalyses the reaction 1,2-di-(4Z,7Z,10Z,13Z,16Z,19Z-docosahexaenoyl)-sn-glycero-3-phosphate + H2O = 1,2-di-(4Z,7Z,10Z,13Z,16Z,19Z-docosahexaenoyl)-sn-glycerol + phosphate. The enzyme catalyses 1,2-di-(5Z,8Z,11Z,14Z)-eicosatetraenoyl-sn-glycero-3-phosphate + H2O = 1,2-di-(5Z,8Z,11Z,14Z)-eicosatetraenoyl-sn-glycerol + phosphate. It carries out the reaction 1,2-di-(9Z,12Z-octadecadienoyl)-sn-glycero-3-phosphate + H2O = 1,2-di-(9Z,12Z-octadecadienoyl)-sn-glycerol + phosphate. The catalysed reaction is 1,2-di-(9Z-octadecenoyl)-sn-glycero-3-phosphate + H2O = 1,2-di-(9Z-octadecenoyl)-sn-glycerol + phosphate. It catalyses the reaction 1,2-dihexadecanoyl-sn-glycero-3-phosphate + H2O = 1,2-dihexadecanoyl-sn-glycerol + phosphate. With respect to regulation, potently inhibited by sphingolipids, in particular, the sphingoid bases sphinganine and sphingosine and ceramide-1-phosphate. Inhibited by concentrations of Mg(2+) and Mn(2+) above their optimums and by Ca(2+), Zn(2+), N-ethylmaleimide and propranolol. Its activity is regulated as follows. Sertraline and propanolol inhibit activity in dose-dependent manners with IC(50) values of 103 uM and 226 uM, respectively. Sertraline and propanolol inhibit activity in dose-dependent manners with IC(50) values of 108 uM and 271 uM, respectively. With respect to regulation, sertraline and propanolol inhibit activity in dose-dependent manners with IC(50) values of 143 uM and 227 uM, respectively. In terms of biological role, acts as a magnesium-dependent phosphatidate phosphatase enzyme which catalyzes the conversion of phosphatidic acid to diacylglycerol during triglyceride, phosphatidylcholine and phosphatidylethanolamine biosynthesis and therefore controls the metabolism of fatty acids at different levels. Is involved in adipocyte differentiation. Recruited at the mitochondrion outer membrane and is involved in mitochondrial fission by converting phosphatidic acid to diacylglycerol. Acts also as nuclear transcriptional coactivator for PPARGC1A/PPARA regulatory pathway to modulate lipid metabolism gene expression. The sequence is that of Phosphatidate phosphatase LPIN1 from Homo sapiens (Human).